A 361-amino-acid chain; its full sequence is Queuine tRNA-ribosyltransferase (361 aa).

D92 (proton acceptor) is an active-site residue. Substrate-binding positions include D92–F96, D146, Q189, and G216. Positions G247–D253 are RNA binding. D266 acts as the Nucleophile in catalysis. Positions T271 to R275 are RNA binding; important for wobble base 34 recognition. Positions 304, 306, 309, and 335 each coordinate Zn(2+).

This sequence belongs to the queuine tRNA-ribosyltransferase family. As to quaternary structure, homodimer. Within each dimer, one monomer is responsible for RNA recognition and catalysis, while the other monomer binds to the replacement base PreQ1. The cofactor is Zn(2+).

The catalysed reaction is 7-aminomethyl-7-carbaguanine + guanosine(34) in tRNA = 7-aminomethyl-7-carbaguanosine(34) in tRNA + guanine. It functions in the pathway tRNA modification; tRNA-queuosine biosynthesis. Functionally, catalyzes the base-exchange of a guanine (G) residue with the queuine precursor 7-aminomethyl-7-deazaguanine (PreQ1) at position 34 (anticodon wobble position) in tRNAs with GU(N) anticodons (tRNA-Asp, -Asn, -His and -Tyr). Catalysis occurs through a double-displacement mechanism. The nucleophile active site attacks the C1' of nucleotide 34 to detach the guanine base from the RNA, forming a covalent enzyme-RNA intermediate. The proton acceptor active site deprotonates the incoming PreQ1, allowing a nucleophilic attack on the C1' of the ribose to form the product. After dissociation, two additional enzymatic reactions on the tRNA convert PreQ1 to queuine (Q), resulting in the hypermodified nucleoside queuosine (7-(((4,5-cis-dihydroxy-2-cyclopenten-1-yl)amino)methyl)-7-deazaguanosine). The polypeptide is Queuine tRNA-ribosyltransferase (Rickettsia africae (strain ESF-5)).